The following is an 871-amino-acid chain: Tegument protein UL47 homolog (871 aa).

The segment at 1 to 212 (MDQHHGARGG…DEDDMEVIRD (212 aa)) is disordered. A Nuclear localization signal motif is present at residues 13 to 33 (IRRPRRSIESRSHPFRATGNT). Polar residues-rich tracts occupy residues 30–41 (TGNTQRTYSTPR) and 59–81 (EQASNQDESSNPSTSNAQQSTSF). Acidic residues-rich tracts occupy residues 114–134 (SSSEEEEEEGPAQAPLDEEDQ), 146–155 (SSDENDEEED), and 185–207 (SESETDIDAEEEEEDDEDDEDDM).

Belongs to the alphaherpesvirinae HHV-1 UL47 family. As to quaternary structure, interacts with US3 kinase. Interacts with UL31 and UL34; these interactions seem important for efficient virion nuclear egress. Interacts with UL41/VHS. Post-translationally, phosphorylated by US3. This phosphorylation is required for proper nuclear localization.

The protein localises to the virion tegument. It localises to the host nucleus. Its subcellular location is the host cytoplasm. Tegument protein that can bind to various RNA transcripts. Plays a role in the attenuation of selective viral and cellular mRNA degradation by modulating the activity of host shutoff RNase UL41/VHS. Also plays a role in the primary envelopment of virions in the perinuclear space, probably by interacting with two nuclear egress proteins UL31 and UL34. In Equus caballus (Horse), this protein is Tegument protein UL47 homolog.